Here is a 494-residue protein sequence, read N- to C-terminus: Sugar phosphate exchanger 3 (494 aa).

Residues 16–36 form a helical membrane-spanning segment; sequence FSHHHVVVFLLTFFSYSLLHA. Asn58 carries an N-linked (GlcNAc...) asparagine glycan. 5 consecutive transmembrane segments (helical) span residues 81–101, 113–133, 147–167, 177–197, and 209–229; these read TLFL…GLFI, WVLS…GALT, LWIV…AVMG, VVFG…ACLA, and FLVT…GLLV. An N-linked (GlcNAc...) asparagine glycan is attached at Asn266. Transmembrane regions (helical) follow at residues 297 to 317, 333 to 353, 357 to 377, 386 to 406, 428 to 448, and 452 to 472; these read LAYA…PFYL, IWYD…SDVL, APVL…YSRS, LLMT…SSAI, GIVD…VSLI, and LGWM…IVFI.

It belongs to the major facilitator superfamily. Organophosphate:Pi antiporter (OPA) (TC 2.A.1.4) family. As to quaternary structure, interacts with ATRAID; the interaction is direct and both proteins are mutually dependent for their stability. In terms of processing, glycosylated. As to expression, expressed in liver, kidney, intestine and pancreas.

Its subcellular location is the endoplasmic reticulum membrane. The protein localises to the lysosome membrane. In terms of biological role, unlike the other SLC37 members, lacks glucose-6-phosphate antiporter activity. In osteoclasts, forms a transporter complex with ATRAID for nitrogen-containing-bisphophonates (N-BPs) required for releasing N-BP molecules that have trafficked to lysosomes through fluid-phase endocytosis into the cytosol. The chain is Sugar phosphate exchanger 3 from Homo sapiens (Human).